Here is a 654-residue protein sequence, read N- to C-terminus: Fimbrin-2 (654 aa).

4 consecutive Calponin-homology (CH) domains span residues 124–241, 269–372, 394–500, and 515–623; these read DSEK…KIQL, LPPE…QHRN, SREE…RYNI, and EITD…YWTL. Actin-binding stretches follow at residues 124–372 and 394–623; these read DSEK…QHRN and SREE…YWTL.

As to quaternary structure, interacts with F-actin.

It localises to the cytoplasm. Its subcellular location is the cytoskeleton. Its function is as follows. Cross-links actin filaments (F-actin). Stabilizes and prevents F-actin depolymerization mediated by profilin. May regulate actin cytoarchitecture, cell cycle, cell division, cell elongation and cytoplasmic tractus. In Arabidopsis thaliana (Mouse-ear cress), this protein is Fimbrin-2.